A 227-amino-acid chain; its full sequence is Cytochrome c oxidase subunit 2 (227 aa).

Topologically, residues 1–14 (MPYPLQLGLQDATS) are mitochondrial intermembrane. The chain crosses the membrane as a helical span at residues 15 to 45 (PIMEELTHFHDHTLMIVFLISSLVLYIISSM). Topologically, residues 46-59 (LTTKLTHTSTMDAQ) are mitochondrial matrix. Residues 60–87 (EVETIWTILPAMILILIALPSLRILYMM) form a helical membrane-spanning segment. Residues 88-227 (DEINDPSLTV…YFEDWSASLL (140 aa)) are Mitochondrial intermembrane-facing. Cu cation contacts are provided by His161, Cys196, Glu198, Cys200, His204, and Met207. Mg(2+) is bound at residue Glu198.

This sequence belongs to the cytochrome c oxidase subunit 2 family. As to quaternary structure, component of the cytochrome c oxidase (complex IV, CIV), a multisubunit enzyme composed of 14 subunits. The complex is composed of a catalytic core of 3 subunits MT-CO1, MT-CO2 and MT-CO3, encoded in the mitochondrial DNA, and 11 supernumerary subunits COX4I, COX5A, COX5B, COX6A, COX6B, COX6C, COX7A, COX7B, COX7C, COX8 and NDUFA4, which are encoded in the nuclear genome. The complex exists as a monomer or a dimer and forms supercomplexes (SCs) in the inner mitochondrial membrane with NADH-ubiquinone oxidoreductase (complex I, CI) and ubiquinol-cytochrome c oxidoreductase (cytochrome b-c1 complex, complex III, CIII), resulting in different assemblies (supercomplex SCI(1)III(2)IV(1) and megacomplex MCI(2)III(2)IV(2)). Found in a complex with TMEM177, COA6, COX18, COX20, SCO1 and SCO2. Interacts with TMEM177 in a COX20-dependent manner. Interacts with COX20. Interacts with COX16. Cu cation serves as cofactor.

The protein resides in the mitochondrion inner membrane. It catalyses the reaction 4 Fe(II)-[cytochrome c] + O2 + 8 H(+)(in) = 4 Fe(III)-[cytochrome c] + 2 H2O + 4 H(+)(out). Its function is as follows. Component of the cytochrome c oxidase, the last enzyme in the mitochondrial electron transport chain which drives oxidative phosphorylation. The respiratory chain contains 3 multisubunit complexes succinate dehydrogenase (complex II, CII), ubiquinol-cytochrome c oxidoreductase (cytochrome b-c1 complex, complex III, CIII) and cytochrome c oxidase (complex IV, CIV), that cooperate to transfer electrons derived from NADH and succinate to molecular oxygen, creating an electrochemical gradient over the inner membrane that drives transmembrane transport and the ATP synthase. Cytochrome c oxidase is the component of the respiratory chain that catalyzes the reduction of oxygen to water. Electrons originating from reduced cytochrome c in the intermembrane space (IMS) are transferred via the dinuclear copper A center (CU(A)) of subunit 2 and heme A of subunit 1 to the active site in subunit 1, a binuclear center (BNC) formed by heme A3 and copper B (CU(B)). The BNC reduces molecular oxygen to 2 water molecules using 4 electrons from cytochrome c in the IMS and 4 protons from the mitochondrial matrix. The sequence is that of Cytochrome c oxidase subunit 2 (MT-CO2) from Dugong dugon (Dugong).